A 416-amino-acid polypeptide reads, in one-letter code: S-adenosylmethionine synthase (416 aa).

His16 contacts ATP. Asp18 lines the Mg(2+) pocket. Residue Glu44 coordinates K(+). 2 residues coordinate L-methionine: Glu57 and Gln100. A flexible loop region spans residues 100-110 (QSPDIAQGVTQ). ATP-binding positions include 175 to 177 (DGK), 251 to 252 (KF), Asp260, 266 to 267 (RK), Ala283, and Lys287. L-methionine is bound at residue Asp260. Lys291 is an L-methionine binding site.

The protein belongs to the AdoMet synthase family. In terms of assembly, homotetramer; dimer of dimers. The cofactor is Mg(2+). It depends on K(+) as a cofactor.

It is found in the cytoplasm. It catalyses the reaction L-methionine + ATP + H2O = S-adenosyl-L-methionine + phosphate + diphosphate. Its pathway is amino-acid biosynthesis; S-adenosyl-L-methionine biosynthesis; S-adenosyl-L-methionine from L-methionine: step 1/1. Functionally, catalyzes the formation of S-adenosylmethionine (AdoMet) from methionine and ATP. The overall synthetic reaction is composed of two sequential steps, AdoMet formation and the subsequent tripolyphosphate hydrolysis which occurs prior to release of AdoMet from the enzyme. The protein is S-adenosylmethionine synthase of Crocosphaera subtropica (strain ATCC 51142 / BH68) (Cyanothece sp. (strain ATCC 51142)).